The primary structure comprises 92 residues: Putative regulatory protein CA_C1717 (92 aa).

The protein belongs to the RemA family.

This Clostridium acetobutylicum (strain ATCC 824 / DSM 792 / JCM 1419 / IAM 19013 / LMG 5710 / NBRC 13948 / NRRL B-527 / VKM B-1787 / 2291 / W) protein is Putative regulatory protein CA_C1717.